The sequence spans 525 residues: Arylsulfatase G (525 aa).

Residues 1–16 (MGWLFLKVLLAGVSFS) form the signal peptide. Residues Asp44, Asp45, and Cys84 each contribute to the Ca(2+) site. Cys84 (nucleophile) is an active-site residue. Residue Cys84 is modified to 3-oxoalanine (Cys). An N-linked (GlcNAc...) asparagine glycan is attached at Asn117. Residue Lys137 participates in substrate binding. The active site involves His139. Residue Ser162 coordinates substrate. Asn215 carries N-linked (GlcNAc...) asparagine glycosylation. A substrate-binding site is contributed by His251. Ca(2+) contacts are provided by Asp302 and Asn303. Asn356 and Asn497 each carry an N-linked (GlcNAc...) asparagine glycan.

This sequence belongs to the sulfatase family. Ca(2+) is required as a cofactor. Post-translationally, N-glycosylated. N-glycosylated with both high mannose and complex type sugars. In terms of processing, the conversion to 3-oxoalanine (also known as C-formylglycine, FGly), of a serine or cysteine residue in prokaryotes and of a cysteine residue in eukaryotes, is critical for catalytic activity. The 63-kDa precursor undergoes proteolytic processing in two steps, yielding two fragments in the first step (apparent molecular masses of 44 and 18 kDa). In the second step, the 44-kDa fragment is processed further to the 34- and 10-kDa chains. The 10-kDa chain is a cleavage product of the 44-kDa fragment but linked to the 18-kDa chain through a disulfide bridge. As to expression, widely expressed, with very low expression in brain, lung, heart and skeletal muscle.

The protein resides in the lysosome. The catalysed reaction is an aryl sulfate + H2O = a phenol + sulfate + H(+). The enzyme catalyses Hydrolysis of the 3-sulfate groups of the N-sulfo-D-glucosamine 3-O-sulfate units of heparin.. Inhibited by phosphate. The phosphate forms a covalent bond with the active site 3-oxoalanine. Displays arylsulfatase activity at acidic pH towards artificial substrates, such as p-nitrocatechol sulfate and also, but with a lower activity towards p-nitrophenyl sulfate and 4-methylumbelliferyl sulfate. Catalyzes the hydrolysis of the 3-sulfate groups of the N-sulfo-D-glucosamine 3-O-sulfate units of heparin. The sequence is that of Arylsulfatase G (ARSG) from Homo sapiens (Human).